Here is a 325-residue protein sequence, read N- to C-terminus: Acetyl-coenzyme A carboxylase carboxyl transferase subunit alpha (325 aa).

The CoA carboxyltransferase C-terminal domain maps to 44 to 298 (QLEGRAEQLR…KTAILSNLEE (255 aa)).

It belongs to the AccA family. In terms of assembly, acetyl-CoA carboxylase is a heterohexamer composed of biotin carboxyl carrier protein (AccB), biotin carboxylase (AccC) and two subunits each of ACCase subunit alpha (AccA) and ACCase subunit beta (AccD).

The protein resides in the cytoplasm. The enzyme catalyses N(6)-carboxybiotinyl-L-lysyl-[protein] + acetyl-CoA = N(6)-biotinyl-L-lysyl-[protein] + malonyl-CoA. It functions in the pathway lipid metabolism; malonyl-CoA biosynthesis; malonyl-CoA from acetyl-CoA: step 1/1. Its function is as follows. Component of the acetyl coenzyme A carboxylase (ACC) complex. First, biotin carboxylase catalyzes the carboxylation of biotin on its carrier protein (BCCP) and then the CO(2) group is transferred by the carboxyltransferase to acetyl-CoA to form malonyl-CoA. This Acaryochloris marina (strain MBIC 11017) protein is Acetyl-coenzyme A carboxylase carboxyl transferase subunit alpha.